Reading from the N-terminus, the 148-residue chain is Large ribosomal subunit protein bL9 (148 aa).

Belongs to the bacterial ribosomal protein bL9 family.

Its function is as follows. Binds to the 23S rRNA. This Staphylococcus aureus (strain bovine RF122 / ET3-1) protein is Large ribosomal subunit protein bL9.